Here is a 62-residue protein sequence, read N- to C-terminus: DNA-directed RNA polymerase subunit Rpo10 (62 aa).

Zn(2+)-binding residues include cysteine 6, cysteine 9, cysteine 43, and cysteine 44.

This sequence belongs to the archaeal Rpo10/eukaryotic RPB10 RNA polymerase subunit family. In terms of assembly, part of the RNA polymerase complex. The cofactor is Zn(2+).

Its subcellular location is the cytoplasm. The enzyme catalyses RNA(n) + a ribonucleoside 5'-triphosphate = RNA(n+1) + diphosphate. Its function is as follows. DNA-dependent RNA polymerase (RNAP) catalyzes the transcription of DNA into RNA using the four ribonucleoside triphosphates as substrates. The chain is DNA-directed RNA polymerase subunit Rpo10 from Methanoculleus marisnigri (strain ATCC 35101 / DSM 1498 / JR1).